Here is a 186-residue protein sequence, read N- to C-terminus: Inner membrane-spanning protein YciB (186 aa).

5 consecutive transmembrane segments (helical) span residues 10–30 (IILF…AVAI), 47–67 (VEPL…ATLL), 76–96 (WKPT…QLMF), 121–141 (WGWT…AYHF), and 149–169 (FKLF…ALYL).

Belongs to the YciB family.

The protein localises to the cell inner membrane. Plays a role in cell envelope biogenesis, maintenance of cell envelope integrity and membrane homeostasis. In Acidovorax ebreus (strain TPSY) (Diaphorobacter sp. (strain TPSY)), this protein is Inner membrane-spanning protein YciB.